We begin with the raw amino-acid sequence, 172 residues long: Peptide deformylase (172 aa).

The Fe cation site is built by Cys-91 and His-133. The active site involves Glu-134. His-137 is a binding site for Fe cation.

It belongs to the polypeptide deformylase family. Fe(2+) is required as a cofactor.

It catalyses the reaction N-terminal N-formyl-L-methionyl-[peptide] + H2O = N-terminal L-methionyl-[peptide] + formate. Its function is as follows. Removes the formyl group from the N-terminal Met of newly synthesized proteins. Requires at least a dipeptide for an efficient rate of reaction. N-terminal L-methionine is a prerequisite for activity but the enzyme has broad specificity at other positions. The sequence is that of Peptide deformylase from Vibrio campbellii (strain ATCC BAA-1116).